Reading from the N-terminus, the 337-residue chain is Tetraacyldisaccharide 4'-kinase (337 aa).

Position 72 to 79 (threonine 72 to threonine 79) interacts with ATP.

The protein belongs to the LpxK family.

The catalysed reaction is a lipid A disaccharide + ATP = a lipid IVA + ADP + H(+). Its pathway is glycolipid biosynthesis; lipid IV(A) biosynthesis; lipid IV(A) from (3R)-3-hydroxytetradecanoyl-[acyl-carrier-protein] and UDP-N-acetyl-alpha-D-glucosamine: step 6/6. Functionally, transfers the gamma-phosphate of ATP to the 4'-position of a tetraacyldisaccharide 1-phosphate intermediate (termed DS-1-P) to form tetraacyldisaccharide 1,4'-bis-phosphate (lipid IVA). This is Tetraacyldisaccharide 4'-kinase from Shewanella sediminis (strain HAW-EB3).